Reading from the N-terminus, the 388-residue chain is L-arabinitol 4-dehydrogenase (388 aa).

Zn(2+)-binding residues include Cys-55, His-80, Glu-81, Cys-110, Cys-113, Cys-116, Cys-124, and Glu-165. NAD(+) is bound by residues 192 to 193, Asp-213, Arg-218, Ile-293, and 317 to 319; these read PI and QYR.

The protein belongs to the zinc-containing alcohol dehydrogenase family. Homotetramer. Requires Zn(2+) as cofactor.

It carries out the reaction L-arabinitol + NAD(+) = L-xylulose + NADH + H(+). It functions in the pathway carbohydrate degradation; L-arabinose degradation via L-arabinitol; D-xylulose 5-phosphate from L-arabinose (fungal route): step 2/5. Its function is as follows. Catalyzes the NAD-dependent oxidation of L-arabinitol to L-xylulose in the fungal L-arabinose catabolic pathway. L-arabinose catabolism is important for using plant material as a carbon source. NADP cannot act as a cosubstrate. This is L-arabinitol 4-dehydrogenase (lad) from Talaromyces emersonii (Thermophilic fungus).